Here is a 206-residue protein sequence, read N- to C-terminus: 2,3-bisphosphoglycerate-dependent phosphoglycerate mutase (206 aa).

Residues 9–16, 22–23, Arg-61, 88–91, Lys-99, 115–116, and 159–160 each bind substrate; these read RHGQSEWN, TG, ERDY, RR, and GN. The active-site Tele-phosphohistidine intermediate is the His-10. The active-site Proton donor/acceptor is Glu-88.

This sequence belongs to the phosphoglycerate mutase family. BPG-dependent PGAM subfamily. Homodimer.

It carries out the reaction (2R)-2-phosphoglycerate = (2R)-3-phosphoglycerate. The protein operates within carbohydrate degradation; glycolysis; pyruvate from D-glyceraldehyde 3-phosphate: step 3/5. Catalyzes the interconversion of 2-phosphoglycerate and 3-phosphoglycerate. The polypeptide is 2,3-bisphosphoglycerate-dependent phosphoglycerate mutase (Brucella melitensis biotype 2 (strain ATCC 23457)).